A 191-amino-acid polypeptide reads, in one-letter code: MVGKRLWVTGYRAYELNVFGSNDPKLKVLKTSLKNTLMQFLDEGLEWLITGGQLGVEQWAVEVALGLKPLYPDFKIAMMVPFTDFGKQWNEDNQGQLAALRGQVDFSDAVSQAPYQQPAQLQGYTRFITIHTDAALLVYDPEFPGKAKWDYQAAEAMADRRDYPVQLITMDDLEETAQAMAEAENEHFQND.

This sequence belongs to the UPF0398 family.

This is UPF0398 protein LSEI_1479 from Lacticaseibacillus paracasei (strain ATCC 334 / BCRC 17002 / CCUG 31169 / CIP 107868 / KCTC 3260 / NRRL B-441) (Lactobacillus paracasei).